We begin with the raw amino-acid sequence, 329 residues long: uncharacterized protein (329 aa).

The SIS domain occupies 38–184; the sequence is IVKLILKSQE…MACLMRAKNF (147 aa). ATP is bound at residue 56–61; sequence GVGKSA. CBS domains lie at 211–267 and 276–329; these read QTTN…GLSL and TLKP…GLKA.

Belongs to the SIS family. GutQ/KpsF subfamily.

This is an uncharacterized protein from Helicobacter pylori (strain J99 / ATCC 700824) (Campylobacter pylori J99).